The sequence spans 492 residues: Fibroblast growth factor receptor substrate 3 (492 aa).

Glycine 2 carries N-myristoyl glycine lipidation. Positions 13–115 (VPHNHPTKFK…QCNSINVTEE (103 aa)) constitute an IRS-type PTB domain. Disordered regions lie at residues 122–230 (SSHP…SDQR), 328–414 (LPPV…PPRQ), 426–454 (GTAR…SSDS), and 469–492 (LQRA…DLPL). The span at 371 to 382 (QKPTSTRASARS) shows a compositional bias: polar residues.

As to quaternary structure, binds NGFR, GRB2, PTPN11 and ERK2. Binds FGFR1 and NTRK1. Post-translationally, phosphorylated on tyrosine residues upon stimulation by BFGF or NGFB. Phosphorylated by ULK2 in vitro.

The protein resides in the membrane. Adapter protein that links FGF and NGF receptors to downstream signaling pathways. Involved in the activation of MAP kinases. Down-regulates ERK2 signaling by interfering with the phosphorylation and nuclear translocation of ERK2. The polypeptide is Fibroblast growth factor receptor substrate 3 (Frs3) (Mus musculus (Mouse)).